Here is a 38-residue protein sequence, read N- to C-terminus: Photosystem II reaction center protein L (38 aa).

Residues S17–F37 traverse the membrane as a helical segment.

Belongs to the PsbL family. PSII is composed of 1 copy each of membrane proteins PsbA, PsbB, PsbC, PsbD, PsbE, PsbF, PsbH, PsbI, PsbJ, PsbK, PsbL, PsbM, PsbT, PsbX, PsbY, PsbZ, Psb30/Ycf12, at least 3 peripheral proteins of the oxygen-evolving complex and a large number of cofactors. It forms dimeric complexes.

Its subcellular location is the plastid. It is found in the chloroplast thylakoid membrane. Its function is as follows. One of the components of the core complex of photosystem II (PSII). PSII is a light-driven water:plastoquinone oxidoreductase that uses light energy to abstract electrons from H(2)O, generating O(2) and a proton gradient subsequently used for ATP formation. It consists of a core antenna complex that captures photons, and an electron transfer chain that converts photonic excitation into a charge separation. This subunit is found at the monomer-monomer interface and is required for correct PSII assembly and/or dimerization. This is Photosystem II reaction center protein L from Antirrhinum majus (Garden snapdragon).